Here is a 164-residue protein sequence, read N- to C-terminus: Phosphopantetheine adenylyltransferase (164 aa).

Ser9 serves as a coordination point for substrate. ATP contacts are provided by residues Ser9 to Phe10 and His17. The substrate site is built by Lys41, Leu73, and Lys87. ATP contacts are provided by residues Gly88–Arg90, Glu98, and Tyr122–Ser128.

The protein belongs to the bacterial CoaD family. As to quaternary structure, homohexamer. It depends on Mg(2+) as a cofactor.

It localises to the cytoplasm. It catalyses the reaction (R)-4'-phosphopantetheine + ATP + H(+) = 3'-dephospho-CoA + diphosphate. It participates in cofactor biosynthesis; coenzyme A biosynthesis; CoA from (R)-pantothenate: step 4/5. Reversibly transfers an adenylyl group from ATP to 4'-phosphopantetheine, yielding dephospho-CoA (dPCoA) and pyrophosphate. The chain is Phosphopantetheine adenylyltransferase from Rhodococcus erythropolis (strain PR4 / NBRC 100887).